The primary structure comprises 58 residues: Large ribosomal subunit protein uL30 (58 aa).

It belongs to the universal ribosomal protein uL30 family. Part of the 50S ribosomal subunit.

The protein is Large ribosomal subunit protein uL30 of Zymomonas mobilis subsp. mobilis (strain ATCC 31821 / ZM4 / CP4).